The chain runs to 255 residues: Kallikrein-15 (255 aa).

A signal peptide spans 1 to 15 (MWLLLPLSFLLTSTA). The propeptide at 16-20 (QDGGK) is activation peptide. Positions 21–253 (LLEGEECAPH…YVKWIRETMK (233 aa)) are serine protease. A disulfide bond links C46 and C62. Residues H61 and D105 each act as charge relay system in the active site. Cystine bridges form between C137-C214, C179-C193, and C204-C229. N170 is a glycosylation site (N-linked (GlcNAc...) asparagine). Catalysis depends on S208, which acts as the Charge relay system. N-linked (GlcNAc...) asparagine glycosylation is present at N231.

It belongs to the peptidase S1 family. Kallikrein subfamily.

Its subcellular location is the secreted. Functionally, protease whose physiological substrate is not yet known. This is Kallikrein-15 (KLK15) from Saguinus oedipus (Cotton-top tamarin).